Consider the following 757-residue polypeptide: 5-methyltetrahydropteroyltriglutamate--homocysteine methyltransferase (757 aa).

5-methyltetrahydropteroyltri-L-glutamate contacts are provided by residues 17 to 20 (RELK) and K117. L-homocysteine is bound by residues 434–436 (IGS) and E487. L-methionine-binding positions include 434–436 (IGS) and E487. 5-methyltetrahydropteroyltri-L-glutamate contacts are provided by residues 518 to 519 (RC) and W564. An L-homocysteine-binding site is contributed by D602. Residue D602 participates in L-methionine binding. 5-methyltetrahydropteroyltri-L-glutamate is bound at residue E608. 3 residues coordinate Zn(2+): H644, C646, and E668. The active-site Proton donor is the H697. Residue C729 participates in Zn(2+) binding.

This sequence belongs to the vitamin-B12 independent methionine synthase family. It depends on Zn(2+) as a cofactor.

The enzyme catalyses 5-methyltetrahydropteroyltri-L-glutamate + L-homocysteine = tetrahydropteroyltri-L-glutamate + L-methionine. Its pathway is amino-acid biosynthesis; L-methionine biosynthesis via de novo pathway; L-methionine from L-homocysteine (MetE route): step 1/1. Its function is as follows. Catalyzes the transfer of a methyl group from 5-methyltetrahydrofolate to homocysteine resulting in methionine formation. In Proteus mirabilis (strain HI4320), this protein is 5-methyltetrahydropteroyltriglutamate--homocysteine methyltransferase.